Here is a 163-residue protein sequence, read N- to C-terminus: Cuticle protein 38 (163 aa).

Repeat copies occupy residues 7 to 10 (AAPV), 13 to 16 (AAPA), 20 to 23 (AAPA), 26 to 29 (AAPV), 56 to 59 (AAPA), 62 to 65 (AAPA), 68 to 71 (AAPA), 75 to 78 (AAPA), 81 to 84 (AAPA), 93 to 96 (AAPV), 123 to 126 (AAPA), 135 to 138 (AAPA), 141 to 144 (AAPA), and 156 to 159 (AAPV).

In terms of biological role, component of the cuticle of migratory locust which contains more than 100 different structural proteins. This chain is Cuticle protein 38, found in Locusta migratoria (Migratory locust).